A 263-amino-acid polypeptide reads, in one-letter code: tRNA pseudouridine synthase A (263 aa).

The active-site Nucleophile is the Asp-51. Tyr-109 provides a ligand contact to substrate.

Belongs to the tRNA pseudouridine synthase TruA family. In terms of assembly, homodimer.

The catalysed reaction is uridine(38/39/40) in tRNA = pseudouridine(38/39/40) in tRNA. In terms of biological role, formation of pseudouridine at positions 38, 39 and 40 in the anticodon stem and loop of transfer RNAs. This Pseudoalteromonas atlantica (strain T6c / ATCC BAA-1087) protein is tRNA pseudouridine synthase A.